A 363-amino-acid chain; its full sequence is S-adenosylmethionine:tRNA ribosyltransferase-isomerase (363 aa).

Belongs to the QueA family. As to quaternary structure, monomer.

The protein resides in the cytoplasm. It carries out the reaction 7-aminomethyl-7-carbaguanosine(34) in tRNA + S-adenosyl-L-methionine = epoxyqueuosine(34) in tRNA + adenine + L-methionine + 2 H(+). Its pathway is tRNA modification; tRNA-queuosine biosynthesis. Functionally, transfers and isomerizes the ribose moiety from AdoMet to the 7-aminomethyl group of 7-deazaguanine (preQ1-tRNA) to give epoxyqueuosine (oQ-tRNA). The protein is S-adenosylmethionine:tRNA ribosyltransferase-isomerase of Haemophilus influenzae (strain PittEE).